A 109-amino-acid chain; its full sequence is FAD assembly factor SdhE (109 aa).

The tract at residues 1–22 (MQDNFTASSPSSSSSASGVAED) is disordered. The segment covering 7 to 17 (ASSPSSSSSAS) has biased composition (low complexity).

This sequence belongs to the SdhE FAD assembly factor family.

It localises to the cytoplasm. An FAD assembly protein, which accelerates covalent attachment of the cofactor into other proteins. Plays an essential role in the assembly of succinate dehydrogenase (SDH, respiratory complex II), an enzyme complex that is a component of both the tricarboxylic acid cycle and the electron transport chain, and which couples the oxidation of succinate to fumarate with the reduction of ubiquinone (coenzyme Q) to ubiquinol. Required for flavinylation of SdhA, when the SDH operon and this gene are overexpressed in G.oxydans. Flavinylation of SdhA is detected only in the presence of sdhE. The sequence is that of FAD assembly factor SdhE from Acetobacter pasteurianus (strain NBRC 105184 / IFO 3283-01).